We begin with the raw amino-acid sequence, 339 residues long: UDP-glucose 4-epimerase (339 aa).

NAD(+) contacts are provided by residues 12–13, 32–37, 59–60, 81–85, N100, S125, Y150, K154, and F179; these read FI, DNLCNS, DI, and FAGLK. S125 and Y150 together coordinate substrate. Y150 functions as the Proton acceptor in the catalytic mechanism. Residues N180, 200 to 201, 217 to 219, R232, and 293 to 296 each bind substrate; these read NL, SVF, and RAGD.

This sequence belongs to the NAD(P)-dependent epimerase/dehydratase family. As to quaternary structure, homodimer. It depends on NAD(+) as a cofactor.

It carries out the reaction UDP-alpha-D-glucose = UDP-alpha-D-galactose. The protein operates within carbohydrate metabolism; galactose metabolism. Its function is as follows. Involved in the metabolism of galactose. Plays an essential role in the incorporation of galactose into meningococcal lipopolysaccharide surface molecules, which are important for pathogenesis. Catalyzes the conversion of UDP-galactose (UDP-Gal) to UDP-glucose (UDP-Glc) through a mechanism involving the transient reduction of NAD. The protein is UDP-glucose 4-epimerase (galE) of Neisseria meningitidis serogroup A / serotype 4A (strain DSM 15465 / Z2491).